The chain runs to 382 residues: ATP phosphoribosyltransferase regulatory subunit (382 aa).

It belongs to the class-II aminoacyl-tRNA synthetase family. HisZ subfamily. In terms of assembly, heteromultimer composed of HisG and HisZ subunits.

The protein localises to the cytoplasm. The protein operates within amino-acid biosynthesis; L-histidine biosynthesis; L-histidine from 5-phospho-alpha-D-ribose 1-diphosphate: step 1/9. Functionally, required for the first step of histidine biosynthesis. May allow the feedback regulation of ATP phosphoribosyltransferase activity by histidine. The protein is ATP phosphoribosyltransferase regulatory subunit of Burkholderia pseudomallei (strain 668).